Reading from the N-terminus, the 319-residue chain is 4-hydroxy-3-methylbut-2-enyl diphosphate reductase (319 aa).

Cysteine 17 contributes to the [4Fe-4S] cluster binding site. (2E)-4-hydroxy-3-methylbut-2-enyl diphosphate contacts are provided by histidine 46 and histidine 79. Histidine 46 and histidine 79 together coordinate dimethylallyl diphosphate. Residues histidine 46 and histidine 79 each contribute to the isopentenyl diphosphate site. Residue cysteine 101 coordinates [4Fe-4S] cluster. Histidine 129 contributes to the (2E)-4-hydroxy-3-methylbut-2-enyl diphosphate binding site. Histidine 129 is a dimethylallyl diphosphate binding site. Residue histidine 129 participates in isopentenyl diphosphate binding. Residue glutamate 131 is the Proton donor of the active site. (2E)-4-hydroxy-3-methylbut-2-enyl diphosphate is bound at residue threonine 170. Cysteine 200 contributes to the [4Fe-4S] cluster binding site. Serine 228, serine 229, asparagine 230, and serine 273 together coordinate (2E)-4-hydroxy-3-methylbut-2-enyl diphosphate. Dimethylallyl diphosphate contacts are provided by serine 228, serine 229, asparagine 230, and serine 273. Isopentenyl diphosphate contacts are provided by serine 228, serine 229, asparagine 230, and serine 273.

The protein belongs to the IspH family. [4Fe-4S] cluster is required as a cofactor.

It carries out the reaction isopentenyl diphosphate + 2 oxidized [2Fe-2S]-[ferredoxin] + H2O = (2E)-4-hydroxy-3-methylbut-2-enyl diphosphate + 2 reduced [2Fe-2S]-[ferredoxin] + 2 H(+). The catalysed reaction is dimethylallyl diphosphate + 2 oxidized [2Fe-2S]-[ferredoxin] + H2O = (2E)-4-hydroxy-3-methylbut-2-enyl diphosphate + 2 reduced [2Fe-2S]-[ferredoxin] + 2 H(+). The protein operates within isoprenoid biosynthesis; dimethylallyl diphosphate biosynthesis; dimethylallyl diphosphate from (2E)-4-hydroxy-3-methylbutenyl diphosphate: step 1/1. Its pathway is isoprenoid biosynthesis; isopentenyl diphosphate biosynthesis via DXP pathway; isopentenyl diphosphate from 1-deoxy-D-xylulose 5-phosphate: step 6/6. Catalyzes the conversion of 1-hydroxy-2-methyl-2-(E)-butenyl 4-diphosphate (HMBPP) into a mixture of isopentenyl diphosphate (IPP) and dimethylallyl diphosphate (DMAPP). Acts in the terminal step of the DOXP/MEP pathway for isoprenoid precursor biosynthesis. The sequence is that of 4-hydroxy-3-methylbut-2-enyl diphosphate reductase from Cereibacter sphaeroides (strain ATCC 17025 / ATH 2.4.3) (Rhodobacter sphaeroides).